We begin with the raw amino-acid sequence, 265 residues long: Deoxycytidine kinase 2 (265 aa).

ATP is bound at residue 31 to 39 (GNIAAGKST). Substrate-binding residues include glutamate 56, tyrosine 89, and glutamine 100. Glutamate 130 serves as the catalytic Proton acceptor. Substrate contacts are provided by arginine 131 and aspartate 136. 191 to 195 (RLQKR) lines the ATP pocket. Glutamate 200 contacts substrate. 243–245 (EDF) is a binding site for ATP.

The protein belongs to the DCK/DGK family. In terms of assembly, homodimer. In terms of tissue distribution, expressed at high levels in adult intestine, spleen, thymus and testis with lower levels in skeletal muscle and eye. In the embryo, expressed at higher levels until day 10 with lower levels in later stages.

The protein resides in the nucleus. The enzyme catalyses 2'-deoxycytidine + a ribonucleoside 5'-triphosphate = dCMP + a ribonucleoside 5'-diphosphate + H(+). It catalyses the reaction 2'-deoxyguanosine + ATP = dGMP + ADP + H(+). The catalysed reaction is 2'-deoxyadenosine + ATP = dAMP + ADP + H(+). Functionally, phosphorylates the deoxyribonucleosides deoxyadenosine, deoxycytidine and deoxyguanosine. Shows highest activity against deoxyguanosine followed by deoxycytidine and then deoxyadenosine. Shows only very minor activity against deoxyuridine and deoxythymidine. The chain is Deoxycytidine kinase 2 from Gallus gallus (Chicken).